A 442-amino-acid polypeptide reads, in one-letter code: Trigger factor (442 aa).

The 86-residue stretch at 162–247 (GDRMTFDFEG…VKAIESRELP (86 aa)) folds into the PPIase FKBP-type domain.

The protein belongs to the FKBP-type PPIase family. Tig subfamily.

It is found in the cytoplasm. The enzyme catalyses [protein]-peptidylproline (omega=180) = [protein]-peptidylproline (omega=0). In terms of biological role, involved in protein export. Acts as a chaperone by maintaining the newly synthesized protein in an open conformation. Functions as a peptidyl-prolyl cis-trans isomerase. This is Trigger factor from Magnetococcus marinus (strain ATCC BAA-1437 / JCM 17883 / MC-1).